The chain runs to 396 residues: uncharacterized protein (396 aa).

12 consecutive transmembrane segments (helical) span residues Thr8–Ser28, Ile44–Val64, Pro73–Pro93, Leu97–Tyr117, Val133–Leu153, Met158–Leu178, Ala213–Pro233, Leu250–Asn270, Val276–Val296, Ile304–Met324, Ile338–Ala358, and Ile363–Phe383.

The protein belongs to the major facilitator superfamily.

The protein resides in the cell membrane. This is an uncharacterized protein from Bacillus subtilis (strain 168).